The chain runs to 393 residues: Digeranylgeranylglycerophospholipid reductase (393 aa).

Ala13, Asp32, Cys43, Ala44, Gly46, Arg95, Val119, Asp274, and Gly286 together coordinate FAD. A 2,3-bis-O-(geranylgeranyl)-sn-glycerol 1-phospholipid is bound by residues Lys327 and Gly363.

The protein belongs to the geranylgeranyl reductase family. DGGGPL reductase subfamily. Requires FAD as cofactor.

The catalysed reaction is a 2,3-bis-O-phytanyl-sn-glycerol 1-phospholipid + 8 A = a 2,3-bis-O-(geranylgeranyl)-sn-glycerol 1-phospholipid + 8 AH2. It carries out the reaction 2,3-bis-O-(phytanyl)-sn-glycerol 1-phosphate + 8 A = 2,3-bis-O-(geranylgeranyl)-sn-glycerol 1-phosphate + 8 AH2. The enzyme catalyses CDP-2,3-bis-O-(geranylgeranyl)-sn-glycerol + 8 AH2 = CDP-2,3-bis-O-(phytanyl)-sn-glycerol + 8 A. It catalyses the reaction archaetidylserine + 8 AH2 = 2,3-bis-O-phytanyl-sn-glycero-3-phospho-L-serine + 8 A. It functions in the pathway membrane lipid metabolism; glycerophospholipid metabolism. Its function is as follows. Is involved in the reduction of 2,3-digeranylgeranylglycerophospholipids (unsaturated archaeols) into 2,3-diphytanylglycerophospholipids (saturated archaeols) in the biosynthesis of archaeal membrane lipids. Catalyzes the formation of archaetidic acid (2,3-di-O-phytanyl-sn-glyceryl phosphate) from 2,3-di-O-geranylgeranylglyceryl phosphate (DGGGP) via the hydrogenation of each double bond of the isoprenoid chains. Is also probably able to reduce double bonds of geranyl groups in CDP-2,3-bis-O-(geranylgeranyl)-sn-glycerol and archaetidylserine, thus acting at various stages in the biosynthesis of archaeal membrane lipids. This is Digeranylgeranylglycerophospholipid reductase from Pyrococcus furiosus (strain ATCC 43587 / DSM 3638 / JCM 8422 / Vc1).